The sequence spans 388 residues: MAKKPKKLEEISKKFGAEREKALNDALKLIEKDFGKGSIMRLGERAEQKVQVMSSGSLALDIALGSGGYPKGRIIEIYGPESSGKTTVALHAVAQAQKEGGIAAFIDAEHALDPAYAAALGVNIDELLLSQPDSGEQGLEIAGKLIDSGAVDLVVVDSVAALVPRAEIDGDIGDSHVGLQARMMSQAMRKLGASINKTKTIAIFINQLREKVGVMFGNPETTPGGRALKFYASVRLDVRGNTQIKGTGDQKETNVGKETKIKVVKNKVAPPFKEAVVEIMYGEGISKTGELLKIASDLDIIKKAGAWYSYKDEKIGQGSENAKKYLAEHPEIFDEIDKQVRSKFGLIDGEEVSEQDTENKKDEPKKEEAVNEEVPLDLGDELEIEIEE.

79–86 (GPESSGKT) serves as a coordination point for ATP. Residues 347 to 388 (IDGEEVSEQDTENKKDEPKKEEAVNEEVPLDLGDELEIEIEE) form a disordered region. Residues 357 to 369 (TENKKDEPKKEEA) show a composition bias toward basic and acidic residues. The segment covering 370 to 388 (VNEEVPLDLGDELEIEIEE) has biased composition (acidic residues).

Belongs to the RecA family.

The protein resides in the cytoplasm. Its function is as follows. Can catalyze the hydrolysis of ATP in the presence of single-stranded DNA, the ATP-dependent uptake of single-stranded DNA by duplex DNA, and the ATP-dependent hybridization of homologous single-stranded DNAs. It interacts with LexA causing its activation and leading to its autocatalytic cleavage. The polypeptide is Protein RecA (Streptococcus pneumoniae (strain Hungary19A-6)).